A 238-amino-acid chain; its full sequence is Large ribosomal subunit protein uL1 (238 aa).

The protein belongs to the universal ribosomal protein uL1 family. In terms of assembly, part of the 50S ribosomal subunit.

Binds directly to 23S rRNA. The L1 stalk is quite mobile in the ribosome, and is involved in E site tRNA release. Functionally, protein L1 is also a translational repressor protein, it controls the translation of the L11 operon by binding to its mRNA. This Frankia casuarinae (strain DSM 45818 / CECT 9043 / HFP020203 / CcI3) protein is Large ribosomal subunit protein uL1.